We begin with the raw amino-acid sequence, 417 residues long: Interferon-gamma-inducible GTPase 10 (417 aa).

Glycine 2 carries the N-myristoyl glycine lipid modification. Positions 67-249 (APLNIAVTGE…PSLESTLLEE (183 aa)) constitute an IRG-type G domain. Residues glycine 78, alanine 79, serine 82, threonine 83, serine 101, lysine 183, aspartate 185, and serine 231 each contribute to the GDP site. The next 2 membrane-spanning stretches (helical) occupy residues 284–302 (EALK…FFND) and 370–387 (AVTG…KSYY).

Belongs to the TRAFAC class dynamin-like GTPase superfamily. GB1/RHD3 GTPase family. GB1 subfamily. Homooligomer; homooligomerization occurs upon GTP-binding and is required for the association with membranous structures. Homodimer; GDP-binding induces formation of an inactive head-to-head homodimer. Post-translationally, myristoylation is required for localization to pathogen-containing vacuoles. In terms of processing, (Microbial infection) Phosphorylated by Toxoplasma gondii ROP18.

It is found in the membrane. The protein localises to the cytoplasmic vesicle membrane. It carries out the reaction GTP + H2O = GDP + phosphate + H(+). Functionally, interferon (IFN)-inducible GTPase that plays important roles in innate immunity against a diverse range of bacterial, viral and protozoan pathogens by mediating cytosolic release of pathogenic ligands that activate the inflammasomes. Following infection, recruited to the membrane of pathogens in a GBP-dependent manner and mediates disruption of the pathogen membrane, liberating ligands that are detected by inflammasomes, such as lipopolysaccharide (LPS) that activates the non-canonical CASP4/CASP11 inflammasome or double-stranded DNA (dsDNA) that activates the AIM2 inflammasome. Promotes AIM2 and NLRP3 inflammasome activation following A.fumigatus infection by liberating beta-glucan, which directly triggers inflammasome assembly. Promotes NLRP3 inflammasome activation following influenza A virus infection. The sequence is that of Interferon-gamma-inducible GTPase 10 from Mus musculus (Mouse).